A 576-amino-acid chain; its full sequence is SNF1-like protein kinase ssp2 (576 aa).

Residues 34 to 285 (YIIRETLGEG…IQEIRRDPWF (252 aa)) enclose the Protein kinase domain. ATP-binding positions include 40–48 (LGEGSFGKV) and K63. D156 (proton acceptor) is an active-site residue. The residue at position 189 (T189) is a Phosphothreonine. The interval 292–348 (YLRPMEEVQGSYADSRIVSKLGEAMGFSEDYIVEALRSDENNEVKEAYNLLHENQVI) is auto-inhibitory domain (AID). The region spanning 304–345 (ADSRIVSKLGEAMGFSEDYIVEALRSDENNEVKEAYNLLHEN) is the UBA domain. Phosphoserine is present on S442.

The protein belongs to the protein kinase superfamily. CAMK Ser/Thr protein kinase family. SNF1 subfamily. As to quaternary structure, component of the AMP-activated protein kinase complex also known as the SNF1 kinase complex (Snf1c), a heterotrimeric complex composed of a catalytic subunit alpha and 2 regulatory subunits beta (amk2) and gamma (cbs2). In terms of processing, phosphorylation at Thr-189 by ssp1 is required for nuclear entry in nutritionally stressed cells.

The protein localises to the cytoplasm. Its subcellular location is the nucleus. It catalyses the reaction L-seryl-[protein] + ATP = O-phospho-L-seryl-[protein] + ADP + H(+). It carries out the reaction L-threonyl-[protein] + ATP = O-phospho-L-threonyl-[protein] + ADP + H(+). Serine/threonine protein kinase essential for release from glucose repression via the phosphorylation of scr1 upon glucose deprivation. Catalytic subunit of the AMP-activated protein kinase complex also known as the SNF1 kinase complex (Snf1c), a central regulator of cellular energy homeostasis, which, in response to a fall in intracellular ATP levels, activates energy-producing pathways and inhibits energy-consuming processes. The complex phosphorylates histone H3 to form H3S10ph, which promotes H3K14ac formation, leading to transcriptional activation through TBP recruitment to the promoters. Regulates proper cell cycle exit and sexual differentiation. Also regulates ste11 levels under nitrogen deprivation. The polypeptide is SNF1-like protein kinase ssp2 (Schizosaccharomyces pombe (strain 972 / ATCC 24843) (Fission yeast)).